An 877-amino-acid polypeptide reads, in one-letter code: ABC transporter A family member 1 (877 aa).

Helical transmembrane passes span 46–66 (YFST…LFLI), 268–288 (VWGG…LLYK), 324–344 (ILIS…FFLG), 347–367 (FFVL…VAFF), 379–399 (IGIG…FSGM), 420–440 (IILF…IGNV), and 479–499 (LLAL…IIPG). Residues 552 to 788 (LIICGLSKSY…YGEGYSVNIV (237 aa)) enclose the ABC transporter domain. 591–598 (GSNGCGKS) contacts ATP.

It belongs to the ABC transporter superfamily. ABCA family.

It is found in the membrane. The polypeptide is ABC transporter A family member 1 (abcA1) (Dictyostelium discoideum (Social amoeba)).